A 234-amino-acid chain; its full sequence is N-(5'-phosphoribosyl)anthranilate isomerase (234 aa).

The disordered stretch occupies residues 211–234 (RAASSSPRPVDGESPAFQRSEKAG).

The protein belongs to the TrpF family.

The catalysed reaction is N-(5-phospho-beta-D-ribosyl)anthranilate = 1-(2-carboxyphenylamino)-1-deoxy-D-ribulose 5-phosphate. Its pathway is amino-acid biosynthesis; L-tryptophan biosynthesis; L-tryptophan from chorismate: step 3/5. This is N-(5'-phosphoribosyl)anthranilate isomerase from Afipia carboxidovorans (strain ATCC 49405 / DSM 1227 / KCTC 32145 / OM5) (Oligotropha carboxidovorans).